The sequence spans 365 residues: Methylthioribose-1-phosphate isomerase (365 aa).

Residues 53-55 (RGA), arginine 90, and glutamine 201 each bind substrate. Aspartate 242 (proton donor) is an active-site residue. A substrate-binding site is contributed by 252–253 (NK).

The protein belongs to the eIF-2B alpha/beta/delta subunits family. MtnA subfamily.

It carries out the reaction 5-(methylsulfanyl)-alpha-D-ribose 1-phosphate = 5-(methylsulfanyl)-D-ribulose 1-phosphate. The protein operates within amino-acid biosynthesis; L-methionine biosynthesis via salvage pathway; L-methionine from S-methyl-5-thio-alpha-D-ribose 1-phosphate: step 1/6. Functionally, catalyzes the interconversion of methylthioribose-1-phosphate (MTR-1-P) into methylthioribulose-1-phosphate (MTRu-1-P). The polypeptide is Methylthioribose-1-phosphate isomerase (Methylorubrum extorquens (strain CM4 / NCIMB 13688) (Methylobacterium extorquens)).